A 309-amino-acid chain; its full sequence is Protein FdhE (309 aa).

Belongs to the FdhE family.

It localises to the cytoplasm. Functionally, necessary for formate dehydrogenase activity. This is Protein FdhE from Salmonella typhimurium (strain LT2 / SGSC1412 / ATCC 700720).